We begin with the raw amino-acid sequence, 360 residues long: MGAPLLSPGWGAGAAGRRWWMLLAPLLPALLLVRPAGALVEGLYCGTRDCYEVLGVSRSAGKAEIARAYRQLARRYHPDRYRPQPGDEGPGRTPQSAEEAFLLVATAYETLKDEETRKDYDYMLDHPEEYYSHYYHYYSRRLAPKVDVRVVILVSVCAISVFQFFSWWNSYNKAISYLATVPKYRIQATEIAKQQGLLKKAKEKGKNKKSKEEIRDEEENIIKNIIKSKIDIKGGYQKPQICDLLLFQIILAPFHLCSYIVWYCRWIYNFNIKGKEYGEEERLYIIRKSMKMSKSQFDSLEDHQKETFLKRELWIKENYEVYKQEQEEELKKKLANDPRWKRYRRWMKNEGPGRLTFVDD.

A helical transmembrane segment spans residues 20 to 40 (WMLLAPLLPALLLVRPAGALV). The region spanning 49–124 (DCYEVLGVSR…ETRKDYDYML (76 aa)) is the J domain. 2 helical membrane passes run 150-170 (VVIL…WWNS) and 244-264 (LLLF…VWYC).

This sequence belongs to the DNAJC25 family.

The protein localises to the membrane. The chain is DnaJ homolog subfamily C member 25 (DNAJC25) from Homo sapiens (Human).